The primary structure comprises 107 residues: Precursor of CEP14 (107 aa).

Residues 1 to 21 (MAVRLIPTIWLFIVFAVIVSA) form the signal peptide. Positions 22–92 (LPSLVSSRKL…GKLRSRHLST (71 aa)) are excised as a propeptide. The N-linked (GlcNAc...) asparagine glycan is linked to Asn-39. The interval 43-76 (REEEKSHMPHVTKTSTLSALPKGKIPNSTPSKKG) is disordered. A hydroxyproline mark is found at Pro-101 and Pro-103.

It belongs to the C-terminally encoded plant signaling peptide (CEP) family. In terms of assembly, interacts with CEP receptors (e.g. CEPR1 and CEPR2). The mature small signaling peptide is generated by proteolytic processing of the longer precursor.

Its subcellular location is the secreted. The protein localises to the extracellular space. It is found in the apoplast. Extracellular signaling peptide that may regulate primary root growth rate and systemic nitrogen (N)-demand signaling. The protein is Precursor of CEP14 of Arabidopsis thaliana (Mouse-ear cress).